Consider the following 84-residue polypeptide: ATPase-stabilizing factor 15 kDa protein (84 aa).

The span at 1–18 shows a compositional bias: basic and acidic residues; that stretch reads MTRTNKWTEREGKADPKY. The interval 1-84 is disordered; that stretch reads MTRTNKWTER…EQKFENVQKE (84 aa). Serine 28 and serine 69 each carry phosphoserine. Residues 74–84 are compositionally biased toward basic and acidic residues; it reads HEQKFENVQKE.

Belongs to the STF2 family.

It localises to the mitochondrion. The protein localises to the cytoplasm. Its function is as follows. Found to stabilize, together with STF1, a complex of intrinsic ATPase inhibitor INH1 and proton-translocating ATPase (F(1)F(0)-ATPase) in mitochondrial membranes. Binds to the F0 part and may function to hold the ATPase inhibitor or STF1 on the F1 subunit. Also acts as a hydrophilins that enhances dry stress tolerance. Cell viability after desiccation and rehydration is due to the antioxidant capacity of the protein, which reduces the number of apoptotic cells during stress conditions by minimising the accumulation of reactive oxygen species (ROS) in the cells. In Saccharomyces cerevisiae (strain ATCC 204508 / S288c) (Baker's yeast), this protein is ATPase-stabilizing factor 15 kDa protein (STF2).